The following is a 359-amino-acid chain: 4-dedimethylamino-4-oxo-anhydrotetracycline transaminase OxyQ (359 aa).

Positions 32, 92, and 155 each coordinate substrate. Pyridoxal 5'-phosphate is bound by residues 91 to 92, N155, Y186, and 216 to 218; these read TK and SLS. K219 carries the post-translational modification N6-(pyridoxal phosphate)lysine. R227 is a pyridoxal 5'-phosphate binding site. R341 contributes to the substrate binding site.

Belongs to the class-I pyridoxal-phosphate-dependent aminotransferase family. Pyridoxal 5'-phosphate is required as a cofactor.

Its pathway is antibiotic biosynthesis; oxytetracycline biosynthesis. In terms of biological role, involved in the biosynthesis of the tetracycline antibiotic, oxytetracycline. Catalyzes the conversion of 4-dedimethylamino-4-oxoanhydrotetracycline to yield 4-amino-4-de(dimethylamino)anhydrotetracycline (4-amino-ATC). The protein is 4-dedimethylamino-4-oxo-anhydrotetracycline transaminase OxyQ of Streptomyces rimosus.